Here is a 59-residue protein sequence, read N- to C-terminus: Beta-defensin 134 (59 aa).

A signal peptide spans 1-19 (MKPLLVVFVFLFLWDPVLA). 3 cysteine pairs are disulfide-bonded: C25-C51, C31-C45, and C35-C52.

This sequence belongs to the beta-defensin family.

It is found in the secreted. In terms of biological role, has antibacterial activity. The sequence is that of Beta-defensin 134 (DEFB134) from Pan troglodytes (Chimpanzee).